The primary structure comprises 166 residues: Phosphopantetheine adenylyltransferase (166 aa).

S8 lines the substrate pocket. Residues S8–F9 and H16 each bind ATP. The substrate site is built by K40, T72, and R86. ATP is bound by residues G87–R89, E97, and Y122–S128.

This sequence belongs to the bacterial CoaD family. Homohexamer. It depends on Mg(2+) as a cofactor.

The protein localises to the cytoplasm. It carries out the reaction (R)-4'-phosphopantetheine + ATP + H(+) = 3'-dephospho-CoA + diphosphate. The protein operates within cofactor biosynthesis; coenzyme A biosynthesis; CoA from (R)-pantothenate: step 4/5. In terms of biological role, reversibly transfers an adenylyl group from ATP to 4'-phosphopantetheine, yielding dephospho-CoA (dPCoA) and pyrophosphate. The polypeptide is Phosphopantetheine adenylyltransferase (Synechococcus elongatus (strain ATCC 33912 / PCC 7942 / FACHB-805) (Anacystis nidulans R2)).